The sequence spans 239 residues: MGRKWANIKEKKASKDKTNSRIYAKFGIEIYVAAKSGDPDPHSNQKLRFVIERAKTYNVPKHIIDRAIEKAKGTGDETYSELRYEGFGPNGSMIIVDALTNNVNRTASDVRAAYSKNGGNMGVSGSVAYMFDNTAIFGVEGKDADELLELLMEADIDVRDILDEDGQAIIYAEPEDFHKVQEGLKAAGIEEFTVAEIEMIPQNDIQLSGEDLEKFEKLIDALEDLEDVQKVYHNVELED.

The protein belongs to the TACO1 family. YeeN subfamily.

It localises to the cytoplasm. This Listeria innocua serovar 6a (strain ATCC BAA-680 / CLIP 11262) protein is Probable transcriptional regulatory protein lin0388.